The primary structure comprises 667 residues: MSELADSGPSGASAPSQLRAVTLEDLGLLLAGGLASPEPLSLEELSERYESSHPTSTASVPEQDTAKHWNQLEQWVVELQAEVACLREHKQRCERATRSLLRELLQVRARVQLQGSELRQLQQEARPAAQAPEKEAPEFSGLQNQMQALDKRLVEVREALTRLRRRQVQQEAERRGAEQEAGLRLAKLTDLLQQEEQGREVACGALQKNQEDSSRRVDLEVARMQAQVTKLGEEVSLRFLKREAKLCGFLQKSFLALEKRMKASESSRLKLEGSLRGELESRWEKLRGLMEERLRALQGQHEESHLLEQCQGLDAAVAQLTKFVQQNQASLNRVLLAEEKAWDAKGRLEESRAGELAAYVQENLEAAQLAGELARQEMHGELVLLREKSRALEASVAQLAGQLKELSGHLPALSSRLDLQEQMLGLRLSEAKTEWEGAERKSLEDLARWRKEVTEHLRGVREKVDGLPQQIESVSDKCLLHKSDSDLRISAEGKAREFKVGALRQELATLLSSVQLLKEDNPGRKIAEMQGKLATFQNQIMKLENCVQANKTIQNLRFNTEARLRTQEMATLWESVLRLWSEEGPRTPLGSWKALPSLVRPRVFIKDMAPGKVVPMNCWGVYQAVRWLRWKASLIKLRALRRPGGVLEKPHSQEQVQQLTPSLFIQK.

Coiled coils occupy residues 76-182 (VVEL…QEAG), 215-302 (RRVD…GQHE), 384-410 (LLRE…SGHL), and 457-521 (LRGV…KEDN).

Its subcellular location is the early endosome. The sequence is that of Coiled-coil domain-containing protein 154 from Homo sapiens (Human).